The following is a 295-amino-acid chain: UDP-N-acetylenolpyruvoylglucosamine reductase (295 aa).

Positions 23–188 constitute an FAD-binding PCMH-type domain; sequence QVGGPADFLA…ISAKFALKPG (166 aa). The active site involves R167. S217 functions as the Proton donor in the catalytic mechanism. Residue E287 is part of the active site.

It belongs to the MurB family. Requires FAD as cofactor.

It is found in the cytoplasm. It catalyses the reaction UDP-N-acetyl-alpha-D-muramate + NADP(+) = UDP-N-acetyl-3-O-(1-carboxyvinyl)-alpha-D-glucosamine + NADPH + H(+). It functions in the pathway cell wall biogenesis; peptidoglycan biosynthesis. Functionally, cell wall formation. This chain is UDP-N-acetylenolpyruvoylglucosamine reductase, found in Streptococcus equi subsp. equi (strain 4047).